Reading from the N-terminus, the 292-residue chain is Probable serine/threonine-protein kinase FPV226 (292 aa).

The Protein kinase domain occupies 14 to 292 (WKIDKLIGCG…DLLRQLVNSL (279 aa)). ATP-binding positions include 20-28 (IGCGGFGCV) and lysine 43. The active-site Proton acceptor is aspartate 147.

This sequence belongs to the protein kinase superfamily. Ser/Thr protein kinase family. Poxviruses subfamily.

It catalyses the reaction L-seryl-[protein] + ATP = O-phospho-L-seryl-[protein] + ADP + H(+). The enzyme catalyses L-threonyl-[protein] + ATP = O-phospho-L-threonyl-[protein] + ADP + H(+). The protein is Probable serine/threonine-protein kinase FPV226 of Vertebrata (FPV).